We begin with the raw amino-acid sequence, 341 residues long: tRNA (guanine-N(7)-)-methyltransferase (341 aa).

Residues glutamate 75, glutamate 100, aspartate 127, and aspartate 150 each coordinate S-adenosyl-L-methionine. The active site involves aspartate 150. Residue lysine 154 coordinates substrate. Residues 156–161 (RHNKRR) are interaction with RNA. Aspartate 186 contributes to the substrate binding site.

The protein belongs to the class I-like SAM-binding methyltransferase superfamily. TrmB family.

It carries out the reaction guanosine(46) in tRNA + S-adenosyl-L-methionine = N(7)-methylguanosine(46) in tRNA + S-adenosyl-L-homocysteine. The protein operates within tRNA modification; N(7)-methylguanine-tRNA biosynthesis. Functionally, catalyzes the formation of N(7)-methylguanine at position 46 (m7G46) in tRNA. The chain is tRNA (guanine-N(7)-)-methyltransferase from Xanthomonas euvesicatoria pv. vesicatoria (strain 85-10) (Xanthomonas campestris pv. vesicatoria).